The chain runs to 177 residues: uncharacterized protein (177 aa).

The signal sequence occupies residues 1 to 22; it reads MCGVVVVIVALVPADPLLPAFA. 3 helical membrane-spanning segments follow: residues 31–51, 94–114, and 136–156; these read VFIP…TCVF, ISLM…LKFV, and LFPI…LLEI.

The protein resides in the membrane. This is an uncharacterized protein from Saccharomyces cerevisiae (strain ATCC 204508 / S288c) (Baker's yeast).